A 194-amino-acid chain; its full sequence is Isopentenyl-diphosphate Delta-isomerase (194 aa).

Mn(2+) contacts are provided by histidine 27 and histidine 34. A Nudix hydrolase domain is found at 32 to 166 (ALHLAFSCHV…PWAFSPWLTL (135 aa)). The active site involves cysteine 69. Histidine 71 is a Mn(2+) binding site. Glutamate 89 is a Mg(2+) binding site. Residues glutamate 116 and glutamate 118 each contribute to the Mn(2+) site. Glutamate 118 is a catalytic residue.

Belongs to the IPP isomerase type 1 family. It depends on Mg(2+) as a cofactor. Mn(2+) is required as a cofactor.

It localises to the cytoplasm. The catalysed reaction is isopentenyl diphosphate = dimethylallyl diphosphate. Its pathway is isoprenoid biosynthesis; dimethylallyl diphosphate biosynthesis; dimethylallyl diphosphate from isopentenyl diphosphate: step 1/1. Catalyzes the 1,3-allylic rearrangement of the homoallylic substrate isopentenyl (IPP) to its highly electrophilic allylic isomer, dimethylallyl diphosphate (DMAPP). The protein is Isopentenyl-diphosphate Delta-isomerase of Clavibacter michiganensis subsp. michiganensis (strain NCPPB 382).